Here is a 330-residue protein sequence, read N- to C-terminus: 3'-5' exonuclease (330 aa).

Positions 1-92 are disordered; the sequence is MDQYLIKMST…DGTPSPEKEI (92 aa). Basic and acidic residues-rich tracts occupy residues 27-39 and 48-66; these read NTTRQTKDAKEKI and KDTPEIIKDKENADTENPP. A phosphoserine mark is found at S79 and S87. The 173-residue stretch at 117-289 folds into the 3'-5' exonuclease domain; sequence SADEVMQWVE…IGQVIYRDIE (173 aa). Mg(2+) is bound by residues D139, E141, and D277.

Belongs to the WRNexo family.

The protein resides in the nucleus. In terms of biological role, has exonuclease activity on both single-stranded and duplex templates bearing overhangs, but not blunt ended duplex DNA, and cleaves in a 3'-5' direction. Essential for the formation of DNA replication focal centers. Has an important role in maintaining genome stability. This chain is 3'-5' exonuclease, found in Drosophila virilis (Fruit fly).